Consider the following 396-residue polypeptide: Elongation factor Tu (396 aa).

Residues 11–205 (KPHVNIGTIG…TIDEYIPTPV (195 aa)) form the tr-type G domain. Residues 20-27 (GHVDHGKT) are G1. 20-27 (GHVDHGKT) provides a ligand contact to GTP. Thr-27 lines the Mg(2+) pocket. The interval 61–65 (GITIN) is G2. The tract at residues 82–85 (DAPG) is G3. Residues 82-86 (DAPGH) and 137-140 (NKTD) each bind GTP. The G4 stretch occupies residues 137 to 140 (NKTD). Residues 175-177 (SAL) are G5.

The protein belongs to the TRAFAC class translation factor GTPase superfamily. Classic translation factor GTPase family. EF-Tu/EF-1A subfamily. In terms of assembly, monomer.

It localises to the cytoplasm. It catalyses the reaction GTP + H2O = GDP + phosphate + H(+). GTP hydrolase that promotes the GTP-dependent binding of aminoacyl-tRNA to the A-site of ribosomes during protein biosynthesis. The chain is Elongation factor Tu from Lacticaseibacillus casei (strain BL23) (Lactobacillus casei).